Reading from the N-terminus, the 33-residue chain is uncharacterized protein (33 aa).

The disordered stretch occupies residues 1–24 (MRTGTRCDLGELSHPRKTLPPRGM).

This is an uncharacterized protein from Treponema pallidum (strain Nichols).